Reading from the N-terminus, the 139-residue chain is MEWIRKYHIAIAWMIATSAMLISLFFSEWMKLPPCDLCWYQRMAMYPLVLILGIGMYRKDPRVSMYAFPFTCIGLILSVYQITIQAFPINEMKICSVGVSCTEDYLNLFGFISIPMLSFIGFLVIIILIYIESDRETKE.

Residues 6-25 form a helical membrane-spanning segment; that stretch reads KYHIAIAWMIATSAMLISLF. Cysteine 35 and cysteine 38 are joined by a disulfide. 2 consecutive transmembrane segments (helical) span residues 40 to 59 and 66 to 83; these read YQRM…MYRK and YAFP…YQIT. Cysteine 95 and cysteine 101 are disulfide-bonded. Residues 110–133 traverse the membrane as a helical segment; the sequence is GFISIPMLSFIGFLVIIILIYIES.

This sequence belongs to the DsbB family. BdbC subfamily.

It localises to the cell membrane. Functionally, required for disulfide bond formation in some proteins. This is Probable disulfide formation protein C 2 (bdbC2) from Bacillus cereus (strain ATCC 10987 / NRS 248).